The primary structure comprises 131 residues: Profilin (131 aa).

Belongs to the profilin family. In terms of assembly, occurs in many kinds of cells as a complex with monomeric actin in a 1:1 ratio.

It is found in the cytoplasm. Its subcellular location is the cytoskeleton. Functionally, binds to actin and affects the structure of the cytoskeleton. At high concentrations, profilin prevents the polymerization of actin, whereas it enhances it at low concentrations. By binding to PIP2, it inhibits the formation of IP3 and DG. The polypeptide is Profilin (Prunus persica (Peach)).